We begin with the raw amino-acid sequence, 541 residues long: MAKELKFSEDARSAMLKGVDQLADTVKSTLGPKGRNVVLEQSYGSPTITNDGVTIAKAIELDDHFENMGAKLVSEVASKTNDIAGDGTTTATVLTQSIVNEGMKNVTAGANPVGIRRGIEEATKTAVDSLHAMAHEVKTQEDIAQIASVSSASEETGKLIAEAMEKVGHDGVITIEESRGVDTSLDVVEGMQFDRGYLSQYMVTDNDKMEADLDNPYILITDKKISNIQDILPLLQSIVEQGKPLLIIADDISGEALPTLVLNKMRGTFNVVAVKAPGFGDRRKEQLQDIAILTGGTVITDDLGLELKDTTIDQLGQANKVTVTKDNTTIVEGAGSKDAISERVEFIRNQIGETTSDFDKEKLQERLAKLAGGVAVVRVGAATETELKERKYRIEDALNATRAAVEEGFVAGGGTALINVIKDVAALKETGDVQTGINIVKRALEEPVRQIAENAGLEGSVIVEKMKEQKPGVGFNAATDEWVDMIKAGIVDPTKVTRSALQNAASVSALLLTTEAVVAEKPEENAPAAPAAPNPGMGGMM.

Residues 29 to 32, 86 to 90, G413, 476 to 478, and D492 each bind ATP; these read TLGP, DGTTT, and NAA. Residues 521–541 are disordered; sequence KPEENAPAAPAAPNPGMGGMM. The segment covering 525–535 has biased composition (low complexity); the sequence is NAPAAPAAPNP.

It belongs to the chaperonin (HSP60) family. In terms of assembly, forms a cylinder of 14 subunits composed of two heptameric rings stacked back-to-back. Interacts with the co-chaperonin GroES.

The protein resides in the cytoplasm. It catalyses the reaction ATP + H2O + a folded polypeptide = ADP + phosphate + an unfolded polypeptide.. Functionally, together with its co-chaperonin GroES, plays an essential role in assisting protein folding. The GroEL-GroES system forms a nano-cage that allows encapsulation of the non-native substrate proteins and provides a physical environment optimized to promote and accelerate protein folding. This is Chaperonin GroEL from Lactiplantibacillus plantarum (strain ATCC BAA-793 / NCIMB 8826 / WCFS1) (Lactobacillus plantarum).